Here is a 155-residue protein sequence, read N- to C-terminus: MPSTSMIEDRSEIERRRFEYLDHPADIQLHSWGSTMEEAFEACLVSMFGYMTDLAKVDEMYEFYWKASGDSLDGLLFQFLDEALNSFHAEPCFVAKRVEILRFDKKKFEIEFRGWGESFDTSKHETEADIKSPTYSNMQINEKPERCDIYVIVDI.

Residues Asp26, Asp154, and Ile155 each coordinate Ca(2+).

Belongs to the archease family.

Its function is as follows. Component of the tRNA-splicing ligase complex required to facilitate the enzymatic turnover of catalytic subunit RtcB (F16A11.2). The protein is Protein archease-like of Caenorhabditis elegans.